We begin with the raw amino-acid sequence, 670 residues long: UvrABC system protein B (670 aa).

The 383-residue stretch at 51-433 folds into the Helicase ATP-binding domain; sequence EGLKKREQFQ…SARIVEQIIR (383 aa). 64–71 serves as a coordination point for ATP; sequence GVTGSGKT. A Beta-hairpin motif is present at residues 117-140; that stretch reads YYDYYQPESYLPAKDQYIEKDAQI. The Helicase C-terminal domain maps to 453–612; it reads DVMQEIRKIV…IVPKTIRKPI (160 aa). One can recognise a UVR domain in the interval 631-666; that stretch reads PNVIIELDAEMREAADRLDFERAIQLRELIKKLEKE.

It belongs to the UvrB family. In terms of assembly, forms a heterotetramer with UvrA during the search for lesions. Interacts with UvrC in an incision complex.

Its subcellular location is the cytoplasm. The UvrABC repair system catalyzes the recognition and processing of DNA lesions. A damage recognition complex composed of 2 UvrA and 2 UvrB subunits scans DNA for abnormalities. Upon binding of the UvrA(2)B(2) complex to a putative damaged site, the DNA wraps around one UvrB monomer. DNA wrap is dependent on ATP binding by UvrB and probably causes local melting of the DNA helix, facilitating insertion of UvrB beta-hairpin between the DNA strands. Then UvrB probes one DNA strand for the presence of a lesion. If a lesion is found the UvrA subunits dissociate and the UvrB-DNA preincision complex is formed. This complex is subsequently bound by UvrC and the second UvrB is released. If no lesion is found, the DNA wraps around the other UvrB subunit that will check the other stand for damage. In Methanosarcina acetivorans (strain ATCC 35395 / DSM 2834 / JCM 12185 / C2A), this protein is UvrABC system protein B.